The chain runs to 219 residues: Peroxiredoxin (219 aa).

The Thioredoxin domain occupies proline 2 to lysine 164. The active-site Cysteine sulfenic acid (-SOH) intermediate is cysteine 44. Arginine 127 is a substrate binding site. Cysteine 206 and cysteine 212 are disulfide-bonded.

Belongs to the peroxiredoxin family. Prx6 subfamily. Homodecamer. Pentamer of dimers that assemble into a ring structure.

It is found in the cytoplasm. It carries out the reaction a hydroperoxide + [thioredoxin]-dithiol = an alcohol + [thioredoxin]-disulfide + H2O. Its function is as follows. Thiol-specific peroxidase that catalyzes the reduction of hydrogen peroxide and organic hydroperoxides to water and alcohols, respectively. Plays a role in cell protection against oxidative stress by detoxifying peroxides. This is Peroxiredoxin from Methanosarcina mazei (strain ATCC BAA-159 / DSM 3647 / Goe1 / Go1 / JCM 11833 / OCM 88) (Methanosarcina frisia).